The chain runs to 421 residues: 5-hydroxytryptamine receptor 2 (421 aa).

Residues 1–21 are Extracellular-facing; the sequence is MLCGRLRHTMNSTTCFFSHRT. N-linked (GlcNAc...) asparagine glycosylation occurs at asparagine 11. Residues 22-42 form a helical membrane-spanning segment; sequence VLIGIVGSLIIAVSVVGNVLV. The Cytoplasmic portion of the chain corresponds to 43-59; sequence CLAIFTEPILSHSKSKF. A helical transmembrane segment spans residues 60-79; the sequence is FIVSLAVADLLLALLVMTFA. The Extracellular portion of the chain corresponds to 80–95; the sequence is LVNSLYGYWLFGETFC. Residues cysteine 95 and cysteine 210 are joined by a disulfide bond. A helical membrane pass occupies residues 96 to 118; the sequence is FIWMSADVMCETASIFSICVISY. The Cytoplasmic segment spans residues 119–138; the sequence is NRLKQVQKPLQYEEFMTTTR. A helical membrane pass occupies residues 139-160; it reads ALLIIASLWICSFVVSFVPFFL. At 161–213 the chain is on the extracellular side; that stretch reads EWHELSMEEIKTIFKDLISDKVKTSDAHTFSFALEQTLGDNRTSNPKPECLFD. Residues 214–234 form a helical membrane-spanning segment; it reads VHFIYSVIYSLFCFYIPCTLM. Topologically, residues 235 to 274 are cytoplasmic; the sequence is LRNYLRLFLIAKKHHVRIKNLHRLHRNQGTQGSKAARTLT. A helical membrane pass occupies residues 275-295; it reads IITGTFLACWLPFFIINPIEA. At 296 to 304 the chain is on the extracellular side; the sequence is VDEHLIPLE. A helical transmembrane segment spans residues 305–325; that stretch reads CFMVTIWLGYFNSCVNPIIYG. The Cytoplasmic segment spans residues 326–421; it reads TSNSKFRAAF…MLSESDTVFS (96 aa).

The protein belongs to the G-protein coupled receptor 1 family. As to expression, central nervous system.

It is found in the cell membrane. This is one of the several different receptors for 5-hydroxytryptamine (serotonin). 5-HT plays important roles in various behavioral and physiological processes in aplysia. These include feeding, locomotion, circadian rhythm, learning and memory, synaptic plasticity, and synaptic growth. This receptor is mediated by G proteins that stimulate phospholipase C. The sequence is that of 5-hydroxytryptamine receptor 2 (5HTB2) from Aplysia californica (California sea hare).